Consider the following 95-residue polypeptide: Aspartyl/glutamyl-tRNA(Asn/Gln) amidotransferase subunit C (95 aa).

Belongs to the GatC family. In terms of assembly, heterotrimer of A, B and C subunits.

The catalysed reaction is L-glutamyl-tRNA(Gln) + L-glutamine + ATP + H2O = L-glutaminyl-tRNA(Gln) + L-glutamate + ADP + phosphate + H(+). It carries out the reaction L-aspartyl-tRNA(Asn) + L-glutamine + ATP + H2O = L-asparaginyl-tRNA(Asn) + L-glutamate + ADP + phosphate + 2 H(+). In terms of biological role, allows the formation of correctly charged Asn-tRNA(Asn) or Gln-tRNA(Gln) through the transamidation of misacylated Asp-tRNA(Asn) or Glu-tRNA(Gln) in organisms which lack either or both of asparaginyl-tRNA or glutaminyl-tRNA synthetases. The reaction takes place in the presence of glutamine and ATP through an activated phospho-Asp-tRNA(Asn) or phospho-Glu-tRNA(Gln). The protein is Aspartyl/glutamyl-tRNA(Asn/Gln) amidotransferase subunit C of Anaeromyxobacter sp. (strain Fw109-5).